The following is a 128-amino-acid chain: uncharacterized protein (128 aa).

4 helical membrane-spanning segments follow: residues 2–22 (LPFY…LTVL), 34–54 (FLYD…AAVC), 64–84 (LPVL…ALFL), and 108–128 (LGLF…TLFL).

It localises to the cell membrane. This is an uncharacterized protein from Treponema pallidum (strain Nichols).